Reading from the N-terminus, the 243-residue chain is uncharacterized protein (243 aa).

Residues 71 to 120 (KRTNVSQRNRKKGIKNNRPHKDINSSPDWGNAHRGTDWQSEKANGMNRAK) are disordered. Residues 78–88 (RNRKKGIKNNR) are compositionally biased toward basic residues. Serine 96 carries the post-translational modification Phosphoserine.

This is an uncharacterized protein from Saccharomyces cerevisiae (strain ATCC 204508 / S288c) (Baker's yeast).